We begin with the raw amino-acid sequence, 374 residues long: MNYPLTLDMGSITYNMDDLYKELAFYSNSTEIPLQDSNFCSTVEGPLLTSFKAVFMPVAYSLIFLLGMMGNILVLVILERHRHTRSSTETFLFHLAVADLLLVFILPFAVAEGSVGWVLGTFLCKTVIALHKINFYCSSLLLACIAVDRYLAIVHAVHAYRRRRLLSIHITCTAIWLAGFLFALPELLFAKVGQPHNNDSLPQCTFSQENEAETRAWFTSRFLYHIGGFLLPMLVMGWCYVGVVHRLLQAQRRPQRQKAVRVAILVTSIFFLCWSPYHIVIFLDTLERLKAVNSSCELSGYLSVAITLCEFLGLAHCCLNPMLYTFAGVKFRSDLSRLLTKLGCAGPASLCQLFPNWRKSSLSESENATSLTTF.

Topologically, residues 1-57 (MNYPLTLDMGSITYNMDDLYKELAFYSNSTEIPLQDSNFCSTVEGPLLTSFKAVFMP) are extracellular. A glycan (N-linked (GlcNAc...) asparagine) is linked at Asn28. A helical transmembrane segment spans residues 58-78 (VAYSLIFLLGMMGNILVLVIL). At 79–90 (ERHRHTRSSTET) the chain is on the cytoplasmic side. The helical transmembrane segment at 91 to 111 (FLFHLAVADLLLVFILPFAVA) threads the bilayer. Over 112–126 (EGSVGWVLGTFLCKT) the chain is Extracellular. An intrachain disulfide couples Cys124 to Cys204. A helical transmembrane segment spans residues 127–147 (VIALHKINFYCSSLLLACIAV). Residues 148–169 (DRYLAIVHAVHAYRRRRLLSIH) lie on the Cytoplasmic side of the membrane. A helical transmembrane segment spans residues 170–190 (ITCTAIWLAGFLFALPELLFA). At 191 to 221 (KVGQPHNNDSLPQCTFSQENEAETRAWFTSR) the chain is on the extracellular side. An N-linked (GlcNAc...) asparagine glycan is attached at Asn198. Residues 222 to 242 (FLYHIGGFLLPMLVMGWCYVG) traverse the membrane as a helical segment. Topologically, residues 243-261 (VVHRLLQAQRRPQRQKAVR) are cytoplasmic. A helical transmembrane segment spans residues 262-282 (VAILVTSIFFLCWSPYHIVIF). Residues 283–306 (LDTLERLKAVNSSCELSGYLSVAI) are Extracellular-facing. A helical membrane pass occupies residues 307–327 (TLCEFLGLAHCCLNPMLYTFA). Topologically, residues 328-374 (GVKFRSDLSRLLTKLGCAGPASLCQLFPNWRKSSLSESENATSLTTF) are cytoplasmic.

Belongs to the G-protein coupled receptor 1 family. In terms of tissue distribution, mainly in spleen, in resting B-cells.

It localises to the cell membrane. In terms of biological role, cytokine receptor that binds to B-lymphocyte chemoattractant (BLC). Involved in B-cell migration into B-cell follicles of spleen and Peyer patches but not into those of mesenteric or peripheral lymph nodes. In Mus musculus (Mouse), this protein is C-X-C chemokine receptor type 5 (Cxcr5).